We begin with the raw amino-acid sequence, 526 residues long: Probable rhamnogalacturonase B (526 aa).

An N-terminal signal peptide occupies residues 1–20 (MHVNTLSVLSLVGLVPLAAA). Cysteine 41 and cysteine 67 are oxidised to a cystine. N-linked (GlcNAc...) asparagine glycosylation occurs at asparagine 144. Residue aspartate 218 is the Proton donor of the active site. Cysteine 220 and cysteine 237 are oxidised to a cystine. Asparagine 238 and asparagine 253 each carry an N-linked (GlcNAc...) asparagine glycan. The active site involves histidine 293. Asparagine 320 carries N-linked (GlcNAc...) asparagine glycosylation. 2 cysteine pairs are disulfide-bonded: cysteine 343/cysteine 349 and cysteine 371/cysteine 380.

The protein belongs to the glycosyl hydrolase 28 family.

It localises to the secreted. The enzyme catalyses Endohydrolysis of alpha-D-GalA-(1-&gt;2)-alpha-L-Rha glycosidic bond in the rhamnogalacturonan I backbone with initial inversion of anomeric configuration releasing oligosaccharides with beta-D-GalA at the reducing end.. Pectinolytic enzymes consist of four classes of enzymes: pectine lyase, polygalacturonase, pectin methylesterase and rhamnogalacturonase. Hydrolyzes alpha-D-galacturonopyranosyl-(1,2)-alpha-L-rhamnopyranosyl linkages in the backbone of the hairy regions of pectins. The chain is Probable rhamnogalacturonase B (rhgB) from Aspergillus terreus (strain NIH 2624 / FGSC A1156).